A 199-amino-acid chain; its full sequence is MAENSNIDDIKAPLLAALGAADLALATVNELITNLRERAEETRTDTRSRVEESRARLTKLQEDLPEQLTELREKFTAEELRKAAEGYLEAATSRYNELVERGEAALERLRSQQSFEEVSARAEGYVDQAVELTQEALGTVASQTRAVGERAAKLVGIELPKKAAPAKKAAPAKKAAPAKKAAAKKAPAKKAAAKKVTQK.

Positions 162–180 are enriched in low complexity; the sequence is KAAPAKKAAPAKKAAPAKK. A disordered region spans residues 162–199; that stretch reads KAAPAKKAAPAKKAAPAKKAAAKKAPAKKAAAKKVTQK. Positions 181 to 199 are enriched in basic residues; that stretch reads AAAKKAPAKKAAAKKVTQK.

This sequence to M.leprae HbhA. Post-translationally, glycosylated. Glycosylation may protect the protein from proteolytic degradation and be important for hemagglutination. It suggests that the carbohydrate moiety may be located within the C-terminal domain of HbhA.

It localises to the cell surface. Required for extrapulmonary dissemination. Mediates adherence to epithelial cells by binding to sulfated glycoconjugates present at the surface of these cells. The chain is Heparin-binding hemagglutinin (hbhA) from Mycobacterium tuberculosis (strain CDC 1551 / Oshkosh).